The following is a 158-amino-acid chain: Phosphopantetheine adenylyltransferase (158 aa).

The protein belongs to the eukaryotic CoaD family.

Its subcellular location is the cytoplasm. It carries out the reaction (R)-4'-phosphopantetheine + ATP + H(+) = 3'-dephospho-CoA + diphosphate. Its pathway is cofactor biosynthesis; coenzyme A biosynthesis. Reversibly transfers an adenylyl group from ATP to 4'-phosphopantetheine, yielding dephospho-CoA (dPCoA) and pyrophosphate. This chain is Phosphopantetheine adenylyltransferase, found in Pyrococcus horikoshii (strain ATCC 700860 / DSM 12428 / JCM 9974 / NBRC 100139 / OT-3).